Reading from the N-terminus, the 215-residue chain is Adenylate kinase (215 aa).

Residue 10 to 15 (GAGKGT) participates in ATP binding. The segment at 30 to 59 (STGDMLRAAIKAGTPLGLEAKKIIDEGGLV) is NMP. AMP-binding positions include T31, R36, 57-59 (GLV), 85-88 (GFPR), and Q92. The segment at 122-159 (GRRVHLASGRTYHVTYNPPKTEGKDDVTGEDLIQRDDD) is LID. ATP is bound by residues R123 and 132-133 (TY). The AMP site is built by R156 and R167. Q200 is an ATP binding site.

Belongs to the adenylate kinase family. In terms of assembly, monomer.

Its subcellular location is the cytoplasm. It carries out the reaction AMP + ATP = 2 ADP. Its pathway is purine metabolism; AMP biosynthesis via salvage pathway; AMP from ADP: step 1/1. Its function is as follows. Catalyzes the reversible transfer of the terminal phosphate group between ATP and AMP. Plays an important role in cellular energy homeostasis and in adenine nucleotide metabolism. The protein is Adenylate kinase of Neisseria gonorrhoeae (strain ATCC 700825 / FA 1090).